Consider the following 293-residue polypeptide: Ethanolamine ammonia-lyase small subunit (293 aa).

Adenosylcob(III)alamin is bound by residues V207 and E228.

It belongs to the EutC family. The basic unit is a heterodimer which dimerizes to form tetramers. The heterotetramers trimerize; 6 large subunits form a core ring with 6 small subunits projecting outwards. The cofactor is adenosylcob(III)alamin.

Its subcellular location is the bacterial microcompartment. It catalyses the reaction ethanolamine = acetaldehyde + NH4(+). It participates in amine and polyamine degradation; ethanolamine degradation. Its function is as follows. Catalyzes the deamination of various vicinal amino-alcohols to oxo compounds. Allows this organism to utilize ethanolamine as the sole source of nitrogen and carbon in the presence of external vitamin B12. The chain is Ethanolamine ammonia-lyase small subunit from Listeria monocytogenes serovar 1/2a (strain ATCC BAA-679 / EGD-e).